A 440-amino-acid polypeptide reads, in one-letter code: Tripartite motif-containing protein 14 (440 aa).

The B box-type zinc-finger motif lies at 17 to 59 (AYGWRCPEHSERPAELFCRRCGRCVCALCPVLGAHRGHPVGLA). Zn(2+)-binding residues include Cys-22, His-25, Cys-45, and His-51. The B30.2/SPRY domain occupies 247-440 (ALLKTSPSPE…EGPISIPRLP (194 aa)).

It belongs to the TRIM/RBCC family. Interacts with MAVS. Interacts with WRNIP1 and PPP6C; these interactions positively regulate the RIG-I signaling pathway. Interacts with CGAS; this interaction stabilizes CGAS and promotes type I interferon production. Interacts with USP14; this interaction mediates the cleavage of 'Lys-48'-linked ubiquitination of CGAS. Interacts with TBK1. Interacts with SPI1. Interacts with KDM4D and USP14. In terms of processing, ubiquitinated. Undergoes 'Lys-63'-linked polyubiquitination; this modification allows IKBKG/NEMO recruitment to MAVS. Undergoes 'Lys-48'-linked polyubiquitination by RNF125; this modification mediates its degradation via the ubiquitin-proteasome pathway. As to expression, expressed with high level in spleen, thymus, liver and testis. Expressed with low level in the brain, kidney, and skeletal muscle. Expressed in various differentiation stages of B-lymphocytes.

It is found in the mitochondrion outer membrane. Its subcellular location is the cytoplasmic vesicle. The protein localises to the phagosome. Functionally, plays a role in the innate immune defense against viruses. Facilitates the type I IFN response by interacting with MAVS at the outer mitochondria membrane and thereby recruiting NF-kappa-B essential modulator IKBKG/NEMO to the MAVS signalosome, leading to the activation of both the IFN regulatory factor 3/IRF3 and NF-kappa-B pathways. Positively regulates the CGAS-induced type I interferon signaling pathway by stabilizing CGAS and inhibiting its autophagic degradation. Inhibits the transcriptional activity of SPI1 in a dose-dependent manner. Also inhibits OPTN-mediated selective autophagic degradation of KDM4D and thereby negatively regulates H3K9me2 and H3K9me3. Mechanistically, recruits USP14 to remove the 'Lys-63'-linked ubiquitination of KDM4D, preventing its recognition by OPTN and subsequent degradation. Plays an essential role in the innate immune defense against viruses and bacteria. Facilitates the type I IFN response by interacting with MAVS at the outer mitochondria membrane and thereby recruiting NF-kappa-B essential modulator IKBKG/NEMO to the MAVS signalosome, leading to the activation of both the IFN regulatory factor 3/IRF3 and NF-kappa-B pathways. Positively regulates the CGAS-induced type I interferon signaling pathway by stabilizing CGAS and inhibiting its autophagic degradation. Acts as a scaffold between TBK1 and STAT3 to promote phosphorylation of STAT3 and resolve interferon-stimulated gene (ISG) expression. Inhibits the transcriptional activity of SPI1 in a dose-dependent manner. The polypeptide is Tripartite motif-containing protein 14 (Trim14) (Mus musculus (Mouse)).